The chain runs to 214 residues: MAEEVPSINIEEWKPRTSIGNLVKNGKISSIKELFDRNLPITEPEIVDVLLPKLKYEVVDIKVVQKQTDAGEISRYKVLVIMGNMDGYVSIGTGKAKQLRVAIQKAIRDAKMNILPVRRGCGSWQCTCGEPHSLPFKVVGKAGSVEVNLLPAPKGTGLVVGSVLKTLLTYAGIRDAWSTTKGETRTTENFVRAGYSALYNTYNFVTLQDWARKR.

The 64-residue stretch at 54–117 (LKYEVVDIKV…RDAKMNILPV (64 aa)) folds into the S5 DRBM domain.

Belongs to the universal ribosomal protein uS5 family. As to quaternary structure, part of the 30S ribosomal subunit. Contacts protein S4.

In terms of biological role, with S4 and S12 plays an important role in translational accuracy. In Saccharolobus islandicus (strain Y.N.15.51 / Yellowstone #2) (Sulfolobus islandicus), this protein is Small ribosomal subunit protein uS5.